Reading from the N-terminus, the 615-residue chain is MFARGSRRRRSGRAPPEAEDPDRGQPCNSCREQCPGFLLHGWRKICQHCKCPREEHAVHAVPVDLERIMCRLISDFQRHSISDDDSGCASEEYAWVPPGLKPEQVYQFFSCLPEDKVPYVNSPGEKYRIKQLLHQLPPHDSEAQYCTALEEEEKKELRAFSQQRKRENLGRGIVRIFPVTITGAICEECGKQIGGGDIAVFASRAGLGACWHPQCFVCTTCQELLVDLIYFYHVGKVYCGRHHAECLRPRCQACDEIIFSPECTEAEGRHWHMDHFCCFECEASLGGQRYVMRQSRPHCCACYEARHAEYCDGCGEHIGLDQGQMAYEGQHWHASDRCFCCSRCGRALLGRPFLPRRGLIFCSRACSLGSEPTAPGPSRRSWSAGPVTAPLAASTASFSAVKGASETTTKGTSTELAPATGPEEPSRFLRGAPHRHSMPELGLRSVPEPPPESPGQPNLRPDDSAFGRQSTPRVSFRDPLVSEGGPRRTLSAPPAQRRRPRSPPPRAPSRRRHHHHNHHHHHNRHPSRRRHYQCDAGSGSDSESCSSSPSSSSSESSEDDGFFLGERIPLPPHLCRPMPAQDTAMETFNSPSLSLPRDSRAGMPRQARDKNCIVA.

Residues 1–12 (MFARGSRRRRSG) are compositionally biased toward basic residues. The tract at residues 1–26 (MFARGSRRRRSGRAPPEAEDPDRGQP) is disordered. The region spanning 74-182 (SDFQRHSISD…IVRIFPVTIT (109 aa)) is the PET domain. LIM zinc-binding domains follow at residues 184-249 (AICE…CLRP), 250-309 (RCQA…RHAE), and 310-373 (YCDG…SEPT). Disordered regions lie at residues 396–567 (ASFS…LGER) and 587–615 (TFNS…CIVA). A compositionally biased stretch (polar residues) spans 405–415 (SETTTKGTSTE). Phosphoserine is present on residues serine 475 and serine 491. The segment covering 508 to 531 (PSRRRHHHHNHHHHHNRHPSRRRH) has biased composition (basic residues). Positions 537–555 (GSGSDSESCSSSPSSSSSE) are enriched in low complexity. Basic and acidic residues predominate over residues 606–615 (QARDKNCIVA).

It belongs to the prickle / espinas / testin family. Interacts with VANGL2 via its C-terminus. The VANGL2-dependent membrane recruitment of PRICKLE3 is a prerequisite for its polarization. Interacts with WTIP. WTIP is involved in the recruitment of PRICKLE3 to the basal body. Interacts with MT-ATP8, a component of the mitochondrial complex V. In terms of tissue distribution, widely expressed.

It localises to the cytoplasm. It is found in the cell membrane. Its subcellular location is the mitochondrion. Its function is as follows. Involved in the planar cell polarity (PCP) pathway that is essential for the polarization of epithelial cells during morphogenetic processes, including gastrulation and neurulation. PCP is maintained by two molecular modules, the global and the core modules, PRICKLE3 being part of the core module. Distinct complexes of the core module segregate to opposite sides of the cell, where they interact with the opposite complex in the neighboring cell at or near the adherents junctions. Involved in the organization of the basal body. Involved in cilia growth and positioning. Required for proper assembly, stability, and function of mitochondrial membrane ATP synthase (mitochondrial complex V). The protein is Prickle planar cell polarity protein 3 of Homo sapiens (Human).